Consider the following 236-residue polypeptide: Protein CUSTOS (236 aa).

Disordered regions lie at residues 1 to 57 and 83 to 236; these read MSES…GTTP and VEPA…KKDE. Basic and acidic residues-rich tracts occupy residues 10–51 and 156–165; these read NTAR…HDGN and EKTEEKSTKE. Residues 173 to 181 carry the Nucleolar localization signal (NLS1) motif; it reads KMKKKKKRK. The span at 182–196 shows a compositional bias: basic and acidic residues; sequence TSSEESQDKVNHQTE. Residues 197–210 show a composition bias toward polar residues; it reads KQSNVEGNQEQTTA. The short motif at 211–219 is the Nucleolar localization signal (NLS2) element; it reads GERLKKKKK. Over residues 214 to 227 the composition is skewed to basic residues; the sequence is LKKKKKKKKKKRKK.

Belongs to the CUSTOS family. As to quaternary structure, interacts (via NLS1 and NLS2) with dvl2; the interaction is negatively regulated by Wnt stimulation. Interacts with csnk1a1. Interacts with ctnnb1; the interaction is positively regulated by Wnt stimulation. In terms of processing, phosphorylated by ck1/csnk1a1.

Its subcellular location is the nucleus envelope. Functionally, essential for Spemann-Mangold organizer formation and subsequent anterior head development in the embryo. Inhibits canonical Wnt signaling pathway by antagonizing nuclear import of beta-catenin (ctnnb1) during embryogenesis. The polypeptide is Protein CUSTOS (Danio rerio (Zebrafish)).